A 380-amino-acid polypeptide reads, in one-letter code: DNA replication and repair protein RecF (380 aa).

30-37 serves as a coordination point for ATP; sequence GPNGFGKT.

This sequence belongs to the RecF family.

It is found in the cytoplasm. Functionally, the RecF protein is involved in DNA metabolism; it is required for DNA replication and normal SOS inducibility. RecF binds preferentially to single-stranded, linear DNA. It also seems to bind ATP. The chain is DNA replication and repair protein RecF from Mycobacterium sp. (strain JLS).